Here is a 609-residue protein sequence, read N- to C-terminus: Threonine--tRNA ligase (609 aa).

The tract at residues 1–143 (MRVLYLHTER…SFKPGDSRAE (143 aa)) is editing domain. Catalytic regions lie at residues 195–491 (PRYL…PRLP) and 196–491 (RYLE…PRLP). Residues C288, H339, and H460 each contribute to the Zn(2+) site.

Belongs to the class-II aminoacyl-tRNA synthetase family. In terms of assembly, homodimer. Requires Zn(2+) as cofactor.

The protein localises to the cytoplasm. The enzyme catalyses tRNA(Thr) + L-threonine + ATP = L-threonyl-tRNA(Thr) + AMP + diphosphate + H(+). Its function is as follows. Catalyzes the attachment of threonine to tRNA(Thr) in a two-step reaction: L-threonine is first activated by ATP to form Thr-AMP and then transferred to the acceptor end of tRNA(Thr). Also edits incorrectly charged L-seryl-tRNA(Thr). This chain is Threonine--tRNA ligase, found in Pyrobaculum neutrophilum (strain DSM 2338 / JCM 9278 / NBRC 100436 / V24Sta) (Thermoproteus neutrophilus).